A 398-amino-acid chain; its full sequence is Succinate--CoA ligase [ADP-forming] subunit beta (398 aa).

Positions 9-254 (KRLLHEYGAP…TSEEDPKEIE (246 aa)) constitute an ATP-grasp domain. Residues Lys-46, 53–55 (GRG), Glu-109, Ala-112, and Glu-117 each bind ATP. Mg(2+) contacts are provided by Asn-209 and Asp-223. Substrate is bound by residues Asn-274 and 331–333 (GIM).

This sequence belongs to the succinate/malate CoA ligase beta subunit family. In terms of assembly, heterotetramer of two alpha and two beta subunits. Mg(2+) is required as a cofactor.

The enzyme catalyses succinate + ATP + CoA = succinyl-CoA + ADP + phosphate. It catalyses the reaction GTP + succinate + CoA = succinyl-CoA + GDP + phosphate. Its pathway is carbohydrate metabolism; tricarboxylic acid cycle; succinate from succinyl-CoA (ligase route): step 1/1. Succinyl-CoA synthetase functions in the citric acid cycle (TCA), coupling the hydrolysis of succinyl-CoA to the synthesis of either ATP or GTP and thus represents the only step of substrate-level phosphorylation in the TCA. The beta subunit provides nucleotide specificity of the enzyme and binds the substrate succinate, while the binding sites for coenzyme A and phosphate are found in the alpha subunit. The chain is Succinate--CoA ligase [ADP-forming] subunit beta from Bartonella henselae (strain ATCC 49882 / DSM 28221 / CCUG 30454 / Houston 1) (Rochalimaea henselae).